We begin with the raw amino-acid sequence, 98 residues long: Aspartyl/glutamyl-tRNA(Asn/Gln) amidotransferase subunit C (98 aa).

It belongs to the GatC family. As to quaternary structure, heterotrimer of A, B and C subunits.

The catalysed reaction is L-glutamyl-tRNA(Gln) + L-glutamine + ATP + H2O = L-glutaminyl-tRNA(Gln) + L-glutamate + ADP + phosphate + H(+). It carries out the reaction L-aspartyl-tRNA(Asn) + L-glutamine + ATP + H2O = L-asparaginyl-tRNA(Asn) + L-glutamate + ADP + phosphate + 2 H(+). Allows the formation of correctly charged Asn-tRNA(Asn) or Gln-tRNA(Gln) through the transamidation of misacylated Asp-tRNA(Asn) or Glu-tRNA(Gln) in organisms which lack either or both of asparaginyl-tRNA or glutaminyl-tRNA synthetases. The reaction takes place in the presence of glutamine and ATP through an activated phospho-Asp-tRNA(Asn) or phospho-Glu-tRNA(Gln). The protein is Aspartyl/glutamyl-tRNA(Asn/Gln) amidotransferase subunit C of Mycobacterium avium (strain 104).